The following is a 215-amino-acid chain: Peroxiredoxin (215 aa).

Residues 6-161 (PLIGEEFPRL…ILRAVRALQT (156 aa)) form the Thioredoxin domain. The active-site Cysteine sulfenic acid (-SOH) intermediate is cysteine 48. Arginine 124 serves as a coordination point for substrate. Cysteine 205 and cysteine 211 are disulfide-bonded.

This sequence belongs to the peroxiredoxin family. Prx6 subfamily. In terms of assembly, homodecamer. Pentamer of dimers that assemble into a ring structure.

Its subcellular location is the cytoplasm. It catalyses the reaction a hydroperoxide + [thioredoxin]-dithiol = an alcohol + [thioredoxin]-disulfide + H2O. In terms of biological role, thiol-specific peroxidase that catalyzes the reduction of hydrogen peroxide and organic hydroperoxides to water and alcohols, respectively. Plays a role in cell protection against oxidative stress by detoxifying peroxides. This Thermotoga petrophila (strain ATCC BAA-488 / DSM 13995 / JCM 10881 / RKU-1) protein is Peroxiredoxin.